A 552-amino-acid chain; its full sequence is Serine/threonine-protein kinase RIO2 (552 aa).

The 176-residue stretch at 97–272 folds into the Protein kinase domain; that stretch reads VGNQMGVGKE…DRDVKCIKDF (176 aa). ATP is bound at residue lysine 123. The active-site Proton acceptor is aspartate 228. A phosphoserine mark is found at serine 332, serine 335, serine 337, serine 350, serine 362, serine 380, serine 382, serine 385, and serine 390. A Nuclear export signal motif is present at residues 399 to 408; it reads ALEEIKGQVV. Phosphoserine occurs at positions 412, 417, and 442. Tyrosine 445 is modified (phosphotyrosine). Residue serine 548 is modified to Phosphoserine.

Belongs to the protein kinase superfamily. RIO-type Ser/Thr kinase family. Associated with late 40S pre-ribosomal particles. Interacts with PLK1 (via its N-terminus). Mg(2+) is required as a cofactor. Autophosphorylated (in vitro). Phosphorylation at Ser-335, Ser-380, Ser-548 by PLK1 affects the timing of the metaphase-anaphase transition.

It localises to the cytoplasm. The enzyme catalyses L-seryl-[protein] + ATP = O-phospho-L-seryl-[protein] + ADP + H(+). It carries out the reaction L-threonyl-[protein] + ATP = O-phospho-L-threonyl-[protein] + ADP + H(+). In terms of biological role, serine/threonine-protein kinase involved in the final steps of cytoplasmic maturation of the 40S ribosomal subunit. Involved in export of the 40S pre-ribosome particles (pre-40S) from the nucleus to the cytoplasm. Its kinase activity is required for the release of NOB1, PNO1 and LTV1 from the late pre-40S and the processing of 18S-E pre-rRNA to the mature 18S rRNA. Regulates the timing of the metaphase-anaphase transition during mitotic progression, and its phosphorylation, most likely by PLK1, regulates this function. The polypeptide is Serine/threonine-protein kinase RIO2 (Homo sapiens (Human)).